We begin with the raw amino-acid sequence, 305 residues long: Aspartate carbamoyltransferase catalytic subunit (305 aa).

Residues R51 and T52 each coordinate carbamoyl phosphate. K79 contributes to the L-aspartate binding site. Carbamoyl phosphate-binding residues include R101, H129, and Q132. The L-aspartate site is built by R165 and R220. Carbamoyl phosphate contacts are provided by G258 and P259.

It belongs to the aspartate/ornithine carbamoyltransferase superfamily. ATCase family. In terms of assembly, heterododecamer (2C3:3R2) of six catalytic PyrB chains organized as two trimers (C3), and six regulatory PyrI chains organized as three dimers (R2).

The catalysed reaction is carbamoyl phosphate + L-aspartate = N-carbamoyl-L-aspartate + phosphate + H(+). It participates in pyrimidine metabolism; UMP biosynthesis via de novo pathway; (S)-dihydroorotate from bicarbonate: step 2/3. Catalyzes the condensation of carbamoyl phosphate and aspartate to form carbamoyl aspartate and inorganic phosphate, the committed step in the de novo pyrimidine nucleotide biosynthesis pathway. This Rubrobacter xylanophilus (strain DSM 9941 / JCM 11954 / NBRC 16129 / PRD-1) protein is Aspartate carbamoyltransferase catalytic subunit.